A 280-amino-acid chain; its full sequence is Pantothenate synthetase (280 aa).

30–37 is an ATP binding site; that stretch reads MGYLHEGH. Residue His37 is the Proton donor of the active site. Gln61 contacts (R)-pantoate. A beta-alanine-binding site is contributed by Gln61. ATP is bound at residue 147-150; the sequence is GQKD. Gln153 is a (R)-pantoate binding site. ATP-binding positions include Val176 and 184 to 187; that span reads MSSR.

It belongs to the pantothenate synthetase family. In terms of assembly, homodimer.

The protein localises to the cytoplasm. It carries out the reaction (R)-pantoate + beta-alanine + ATP = (R)-pantothenate + AMP + diphosphate + H(+). It participates in cofactor biosynthesis; (R)-pantothenate biosynthesis; (R)-pantothenate from (R)-pantoate and beta-alanine: step 1/1. Catalyzes the condensation of pantoate with beta-alanine in an ATP-dependent reaction via a pantoyl-adenylate intermediate. This chain is Pantothenate synthetase, found in Thermotoga petrophila (strain ATCC BAA-488 / DSM 13995 / JCM 10881 / RKU-1).